We begin with the raw amino-acid sequence, 131 residues long: Ribosome-binding factor A (131 aa).

Belongs to the RbfA family. Monomer. Binds 30S ribosomal subunits, but not 50S ribosomal subunits or 70S ribosomes.

The protein resides in the cytoplasm. In terms of biological role, one of several proteins that assist in the late maturation steps of the functional core of the 30S ribosomal subunit. Associates with free 30S ribosomal subunits (but not with 30S subunits that are part of 70S ribosomes or polysomes). Required for efficient processing of 16S rRNA. May interact with the 5'-terminal helix region of 16S rRNA. The chain is Ribosome-binding factor A from Gloeothece citriformis (strain PCC 7424) (Cyanothece sp. (strain PCC 7424)).